A 404-amino-acid polypeptide reads, in one-letter code: G2/mitotic-specific cyclin-B1 (404 aa).

The protein belongs to the cyclin family. Cyclin AB subfamily. As to quaternary structure, interacts with the CDK1 protein kinase to form a serine/threonine kinase holoenzyme complex also known as maturation promoting factor (MPF). The cyclin subunit imparts substrate specificity to the complex.

Its function is as follows. Essential for the control of the cell cycle at the G2/M (mitosis) transition. The protein is G2/mitotic-specific cyclin-B1 (ccnb1) of Oryzias latipes (Japanese rice fish).